A 92-amino-acid chain; its full sequence is Acylphosphatase (92 aa).

An Acylphosphatase-like domain is found at 5-92 (YIVAYVYGVV…TPFETFSIRY (88 aa)). Catalysis depends on residues R20 and N38.

Belongs to the acylphosphatase family.

It catalyses the reaction an acyl phosphate + H2O = a carboxylate + phosphate + H(+). The protein is Acylphosphatase (acyP) of Yersinia pseudotuberculosis serotype O:1b (strain IP 31758).